The following is a 415-amino-acid chain: ATP-dependent RNA helicase RhlB (415 aa).

A Q motif motif is present at residues 9 to 37 (KKFSDFALYPPIVEVLDSKGFNNCTPIQA). Residues 40 to 219 (LPTTLAGKDV…FEHMNNAEYV (180 aa)) enclose the Helicase ATP-binding domain. 53–60 (AQTGTGKT) lines the ATP pocket. A DEAD box motif is present at residues 165–168 (DEAD). The Helicase C-terminal domain occupies 245–390 (RLLQTLIEEE…VSKYNSDALL (146 aa)). The interval 396-415 (PKRLTRRRSGAPRHNRKRPG) is disordered. The span at 398-415 (RLTRRRSGAPRHNRKRPG) shows a compositional bias: basic residues.

Belongs to the DEAD box helicase family. RhlB subfamily. Component of the RNA degradosome, which is a multiprotein complex involved in RNA processing and mRNA degradation.

The protein localises to the cytoplasm. The enzyme catalyses ATP + H2O = ADP + phosphate + H(+). DEAD-box RNA helicase involved in RNA degradation. Has RNA-dependent ATPase activity and unwinds double-stranded RNA. This is ATP-dependent RNA helicase RhlB from Sodalis glossinidius (strain morsitans).